A 225-amino-acid chain; its full sequence is PKHD-type hydroxylase YbiX (225 aa).

The 100-residue stretch at T78–S177 folds into the Fe2OG dioxygenase domain. Residues H96, D98, and H158 each coordinate Fe cation. Residue R168 coordinates 2-oxoglutarate.

Fe(2+) serves as cofactor. The cofactor is L-ascorbate.

The polypeptide is PKHD-type hydroxylase YbiX (Shigella boydii serotype 18 (strain CDC 3083-94 / BS512)).